The sequence spans 328 residues: Protease HtpX homolog (328 aa).

Helical transmembrane passes span 6 to 26 (TAML…LIGG) and 28 to 48 (SGMM…YWNS). His-130 is a Zn(2+) binding site. Residue Glu-131 is part of the active site. His-134 contacts Zn(2+). 2 helical membrane-spanning segments follow: residues 145–165 (ITAT…FFGG) and 172–192 (PLGA…AMLV). Glu-201 provides a ligand contact to Zn(2+). The segment at 279–328 (QYGGGTGPSVGTPTRSGSTGPAMTANPERKSRSVPNTGRGGSQPPKGPWS) is disordered. Residues 287–299 (SVGTPTRSGSTGP) show a composition bias toward low complexity.

It belongs to the peptidase M48B family. The cofactor is Zn(2+).

It is found in the cell inner membrane. The polypeptide is Protease HtpX homolog (Rhizobium rhizogenes (strain K84 / ATCC BAA-868) (Agrobacterium radiobacter)).